The following is a 667-amino-acid chain: Smc-like protein Sph2 (667 aa).

Coiled coils occupy residues 153–295 (GSIQ…SLAT) and 355–517 (GRLD…AITA).

It belongs to the Sph1/Sph2 family.

It is found in the cytoplasm. In terms of biological role, may play a role in replication. The protein is Smc-like protein Sph2 (sph2) of Halobacterium salinarum (strain ATCC 29341 / DSM 671 / R1).